Consider the following 250-residue polypeptide: N-acyl homoserine lactonase (250 aa).

Zn(2+)-binding residues include His104, His106, Asp108, His109, His169, Asp191, and His235.

It belongs to the metallo-beta-lactamase superfamily. In terms of assembly, monomer. Requires Zn(2+) as cofactor.

It catalyses the reaction an N-acyl-L-homoserine lactone + H2O = an N-acyl-L-homoserine + H(+). The polypeptide is N-acyl homoserine lactonase (Bacillus cereus).